The sequence spans 1058 residues: Ubiquitin-like modifier-activating enzyme 1 (1058 aa).

A disordered region spans residues 1-46 (MSSSPLSKKRRVSGPDPKPGSNCSSAQSVLSEVSSVPTNGMAKNGS). S2 bears the N-acetylserine mark. Residues S4, S13, S21, S24, and S46 each carry the phosphoserine modification. The span at 24–36 (SSAQSVLSEVSSV) shows a compositional bias: low complexity. Y55 carries the post-translational modification Phosphotyrosine. 2 consecutive repeat copies span residues 63–199 (GHEA…GQLF) and 459–611 (GSDL…QVVI). Positions 63–611 (GHEAMKMLQT…GTKGNVQVVI (549 aa)) are 2 approximate repeats. ATP contacts are provided by residues A478, D504, R515, K528, and 576-577 (DN). Residue K528 is modified to N6-succinyllysine. The active-site Glycyl thioester intermediate is the C632. K671 carries the post-translational modification N6-acetyllysine. The residue at position 800 (T800) is a Phosphothreonine. Residues S810, S816, S820, and S835 each carry the phosphoserine modification. At K980 the chain carries N6-acetyllysine.

This sequence belongs to the ubiquitin-activating E1 family. As to quaternary structure, monomer. Interacts with GAN (via BTB domain). Post-translationally, ISGylated.

It localises to the cytoplasm. The protein localises to the mitochondrion. It is found in the nucleus. It catalyses the reaction ATP + ubiquitin + [E1 ubiquitin-activating enzyme]-L-cysteine = AMP + diphosphate + S-ubiquitinyl-[E1 ubiquitin-activating enzyme]-L-cysteine.. It participates in protein modification; protein ubiquitination. In terms of biological role, catalyzes the first step in ubiquitin conjugation to mark cellular proteins for degradation through the ubiquitin-proteasome system. Activates ubiquitin by first adenylating its C-terminal glycine residue with ATP, and thereafter linking this residue to the side chain of a cysteine residue in E1, yielding a ubiquitin-E1 thioester and free AMP. Essential for the formation of radiation-induced foci, timely DNA repair and for response to replication stress. Promotes the recruitment of TP53BP1 and BRCA1 at DNA damage sites. The polypeptide is Ubiquitin-like modifier-activating enzyme 1 (Rattus norvegicus (Rat)).